Consider the following 750-residue polypeptide: Neprilysin (750 aa).

Residues 1 to 14 (MGKSESQMDITDIN) show a composition bias toward polar residues. The tract at residues 1 to 20 (MGKSESQMDITDINTPKPKK) is disordered. Gly2 is lipidated: N-myristoyl glycine. Residues 2–28 (GKSESQMDITDINTPKPKKKQRWTPLE) lie on the Cytoplasmic side of the membrane. Phosphoserine occurs at positions 4 and 6. The Stop-transfer sequence motif lies at 16–23 (PKPKKKQR). The helical; Signal-anchor for type II membrane protein transmembrane segment at 29 to 51 (ISLSVLVLLLTIIAVTMIALYAT) threads the bilayer. Residues 52-750 (YDDGICKSSD…MNPEKKCRVW (699 aa)) are Extracellular-facing. The region spanning 56-750 (ICKSSDCIKS…MNPEKKCRVW (695 aa)) is the Peptidase M13 domain. Intrachain disulfides connect Cys57–Cys62, Cys80–Cys735, Cys88–Cys695, Cys143–Cys411, Cys234–Cys242, and Cys621–Cys747. Position 103 (Arg103) interacts with a peptide. The N-linked (GlcNAc...) asparagine glycan is linked to Asn145. N-linked (GlcNAc...) asparagine glycans are attached at residues Asn285 and Asn325. Residue His584 participates in Zn(2+) binding. The active site involves Glu585. His588 is a Zn(2+) binding site. Asn628 carries N-linked (GlcNAc...) asparagine glycosylation. Position 647 (Glu647) interacts with Zn(2+). The active-site Proton donor is Asp651.

Belongs to the peptidase M13 family. The cofactor is Zn(2+). In terms of processing, myristoylation is a determinant of membrane targeting. Glycosylation at Asn-628 is necessary both for surface expression and neutral endopeptidase activity.

The protein localises to the cell membrane. It catalyses the reaction Preferential cleavage of polypeptides between hydrophobic residues, particularly with Phe or Tyr at P1'.. It carries out the reaction substance P + H2O = substance P(1-9) + L-Leu-L-Met-NH2. The enzyme catalyses substance P + H2O = substance P(1-7) + L-Phe-Gly-L-Leu-L-Met-NH2. The catalysed reaction is neurotensin + H2O = neurotensin(1-11) + L-isoleucyl-L-leucine. It catalyses the reaction neurotensin + H2O = neurotensin(1-10) + L-tyrosyl-L-isoleucyl-L-leucine. Inhibited in a dose dependent manner by opiorphin. Activated by K49-P1-20, a twenty-residue synthetic peptide shortened from the snake B.asper myotoxin II. Its function is as follows. Thermolysin-like specificity, but is almost confined on acting on polypeptides of up to 30 amino acids. Biologically important in the destruction of opioid peptides such as Met- and Leu-enkephalins by cleavage of a Gly-Phe bond. Catalyzes cleavage of bradykinin, substance P and neurotensin peptides. Able to cleave angiotensin-1, angiotensin-2 and angiotensin 1-9. Involved in the degradation of atrial natriuretic factor (ANF) and brain natriuretic factor (BNP(1-32)). Displays UV-inducible elastase activity toward skin preelastic and elastic fibers. This Homo sapiens (Human) protein is Neprilysin.